A 414-amino-acid chain; its full sequence is ZP domain-containing protein (414 aa).

The first 17 residues, 1–17 (MFLYSFVFLMLLGLSSA), serve as a signal peptide directing secretion. Residues 18–65 (QTESATSPDEVETEPTMSTDQPETSPSMSTETEPTTETPPVTTPPPPD) are disordered. The Extracellular portion of the chain corresponds to 18–364 (QTESATSPDE…GAQEAVSSLT (347 aa)). Low complexity predominate over residues 39–57 (PETSPSMSTETEPTTETPP). Residues 70–323 (ICTNEKMEVF…SRCAKGCETS (254 aa)) enclose the ZP domain. C241 and C302 are disulfide-bonded. A helical transmembrane segment spans residues 365-385 (IFAAVAGVLGVIVLFLAVALV). Topologically, residues 386-414 (MLYKRYRSPQSATRVVYTKTANEEGKLLV) are cytoplasmic.

Component of the acid-insoluble and acid-soluble organic matrix of the aragonitic skeleton (at protein level).

Its subcellular location is the membrane. This Acropora millepora (Staghorn coral) protein is ZP domain-containing protein.